A 287-amino-acid polypeptide reads, in one-letter code: Shikimate kinase 3, chloroplastic (287 aa).

The N-terminal 57 residues, 1–57, are a transit peptide targeting the chloroplast; the sequence is MDAGVGLRAKPGAWAGLGNPRRSSTARVPVRFAVEKFAQPLVLGSDRRSCGAKLKVS. 98 to 105 provides a ligand contact to ATP; that stretch reads GMMGSGKT. A Mg(2+)-binding site is contributed by T105. Substrate contacts are provided by D123, R148, and G170. An ATP-binding site is contributed by R209.

The protein belongs to the shikimate kinase family. Mg(2+) is required as a cofactor. As to expression, expressed in panicles.

The protein resides in the plastid. It localises to the chloroplast. The enzyme catalyses shikimate + ATP = 3-phosphoshikimate + ADP + H(+). Its pathway is metabolic intermediate biosynthesis; chorismate biosynthesis; chorismate from D-erythrose 4-phosphate and phosphoenolpyruvate: step 5/7. Its function is as follows. Catalyzes the specific phosphorylation of the 3-hydroxyl group of shikimic acid using ATP as a cosubstrate. This Oryza sativa subsp. japonica (Rice) protein is Shikimate kinase 3, chloroplastic (SK3).